The sequence spans 277 residues: Indole-3-glycerol phosphate synthase (277 aa).

Belongs to the TrpC family.

It catalyses the reaction 1-(2-carboxyphenylamino)-1-deoxy-D-ribulose 5-phosphate + H(+) = (1S,2R)-1-C-(indol-3-yl)glycerol 3-phosphate + CO2 + H2O. Its pathway is amino-acid biosynthesis; L-tryptophan biosynthesis; L-tryptophan from chorismate: step 4/5. The sequence is that of Indole-3-glycerol phosphate synthase from Pseudomonas putida (strain GB-1).